The primary structure comprises 508 residues: Ras association domain-containing protein 10 (508 aa).

The Ras-associating domain maps to 1-133 (MDPSEKKISV…VRFVLVRSEA (133 aa)). Disordered regions lie at residues 51–81 (RRGLTEDPSGQLELPEPPDENDEDDDDAMPP) and 186–221 (KLNRRRQQQPSSPCSSTSSSTASSCSSSARTHESAS). Acidic residues predominate over residues 66–78 (EPPDENDEDDDDA). The span at 195-214 (PSSPCSSTSSSTASSCSSSA) shows a compositional bias: low complexity. Coiled coils occupy residues 235-266 (QDHTIRQQVQRLRELDREIDRYEAKVHLDRMR) and 319-358 (LEELARRCDDLVRLQEERAQQEELLERLSAEIQEELNQRW). The segment at 473–508 (GLAKSCPGNDEDSDTGLSSMHSQDSDSVPPVCESLV) is disordered. Residues 487–498 (TGLSSMHSQDSD) show a composition bias toward polar residues.

Expressed in neural progenitor cells (at protein level).

Its subcellular location is the cytoplasm. It is found in the cytosol. It localises to the cytoskeleton. The protein localises to the microtubule organizing center. The protein resides in the centrosome. Its subcellular location is the spindle pole. In terms of biological role, plays an important role in regulating embryonic neurogenesis. The chain is Ras association domain-containing protein 10 (Rassf10) from Mus musculus (Mouse).